The following is a 162-amino-acid chain: MRIGLYPGTFDPLTLGHLDIIQRAMALVDRLVIGVAINRDKGPLFSLEERVRMVETECRAIAANGGEIVVHPFENLLIDCARDVGASVIVRGLRAVADFEYEFQMVGMNRALDAGIETVFLMADARRQAIASKLVKEIARLGGDVSSFVTPDVGAALVAKYR.

Residue Thr-9 participates in substrate binding. Residues 9–10 (TF) and His-17 each bind ATP. 3 residues coordinate substrate: Lys-41, Leu-77, and Arg-91. Residues 92-94 (GLR), Glu-102, and 127-133 (RQAIASK) each bind ATP.

Belongs to the bacterial CoaD family. Homohexamer. The cofactor is Mg(2+).

It localises to the cytoplasm. The catalysed reaction is (R)-4'-phosphopantetheine + ATP + H(+) = 3'-dephospho-CoA + diphosphate. It functions in the pathway cofactor biosynthesis; coenzyme A biosynthesis; CoA from (R)-pantothenate: step 4/5. Reversibly transfers an adenylyl group from ATP to 4'-phosphopantetheine, yielding dephospho-CoA (dPCoA) and pyrophosphate. This Cereibacter sphaeroides (strain ATCC 17029 / ATH 2.4.9) (Rhodobacter sphaeroides) protein is Phosphopantetheine adenylyltransferase.